Reading from the N-terminus, the 294-residue chain is Nucleotide-binding protein Smlt1108 (294 aa).

16–23 (GLSGSGKS) is an ATP binding site. 69-72 (DVRG) contributes to the GTP binding site.

Belongs to the RapZ-like family.

In terms of biological role, displays ATPase and GTPase activities. This Stenotrophomonas maltophilia (strain K279a) protein is Nucleotide-binding protein Smlt1108.